Reading from the N-terminus, the 421-residue chain is UDP-N-acetylglucosamine 1-carboxyvinyltransferase (421 aa).

22 to 23 (KN) serves as a coordination point for phosphoenolpyruvate. Arg-92 provides a ligand contact to UDP-N-acetyl-alpha-D-glucosamine. Catalysis depends on Cys-116, which acts as the Proton donor. Cys-116 carries the post-translational modification 2-(S-cysteinyl)pyruvic acid O-phosphothioketal. UDP-N-acetyl-alpha-D-glucosamine-binding positions include 121–125 (RPVDQ), Asp-304, and Ile-326.

Belongs to the EPSP synthase family. MurA subfamily.

It localises to the cytoplasm. The catalysed reaction is phosphoenolpyruvate + UDP-N-acetyl-alpha-D-glucosamine = UDP-N-acetyl-3-O-(1-carboxyvinyl)-alpha-D-glucosamine + phosphate. It functions in the pathway cell wall biogenesis; peptidoglycan biosynthesis. In terms of biological role, cell wall formation. Adds enolpyruvyl to UDP-N-acetylglucosamine. The chain is UDP-N-acetylglucosamine 1-carboxyvinyltransferase from Bordetella avium (strain 197N).